Here is a 1330-residue protein sequence, read N- to C-terminus: ABC multidrug transporter mdr4 (1330 aa).

N-linked (GlcNAc...) asparagine glycosylation is present at N3. Helical transmembrane passes span 90 to 110 (VLLIIGGLLFAICAGIPFPLL), 144 to 164 (VLYVIYITIANFCFIYAHSTC), 218 to 238 (KVGLVISTLSYFVAAYVVAFI), 243 to 263 (IAGMLVSVVPCFFLMALGGGH), 324 to 344 (HAAQLGCLYFIAYSANALAFW), and 370 to 390 (IFVLIDASFILSQVAPFIHVF). Positions 94–392 (IGGLLFAICA…VAPFIHVFAS (299 aa)) constitute an ABC transmembrane type-1 1 domain. An ABC transporter 1 domain is found at 428 to 666 (IRFRDVHFKY…GGVYAEMVRL (239 aa)). Position 463-470 (463-470 (GPSGGGKS)) interacts with ATP. N-linked (GlcNAc...) asparagine glycosylation occurs at N707. The tract at residues 717-736 (VADTPSDSRDGSEEEARKKR) is disordered. Positions 722–733 (SDSRDGSEEEAR) are enriched in basic and acidic residues. 6 consecutive transmembrane segments (helical) span residues 761–781 (LLGLAMSVIIGGSYSAEAIVF), 806–826 (LLFFILALVEFGANVVGGCAF), 871–893 (ASALGGITGTTIGLLLATAVNLI), 903–923 (AWKITIVLFPTIPVLLVSGMM), 989–1009 (AWLALAFSISNLVYALAYWWG), and 1023–1043 (FFIVMPALLFSTQSCGQMFAL). Residues 761 to 1049 (LLGLAMSVII…MFALAPDISK (289 aa)) enclose the ABC transmembrane type-1 2 domain. The ABC transporter 2 domain maps to 1086–1325 (AQLRDVHFTY…SETYRTSVIH (240 aa)). Residue 1121–1128 (GPSGSGKS) coordinates ATP.

The protein belongs to the ABC transporter superfamily. ABCB family. Multidrug resistance exporter (TC 3.A.1.201) subfamily.

It is found in the cell membrane. The enzyme catalyses itraconazole(in) + ATP + H2O = itraconazole(out) + ADP + phosphate + H(+). It carries out the reaction voriconazole(in) + ATP + H2O = voriconazole(out) + ADP + phosphate + H(+). Its function is as follows. Pleiotropic ABC efflux transporter that confers resistance to azoles such as itraconazole and voriconazole. This is ABC multidrug transporter mdr4 from Aspergillus fumigatus (strain ATCC MYA-4609 / CBS 101355 / FGSC A1100 / Af293) (Neosartorya fumigata).